We begin with the raw amino-acid sequence, 38 residues long: Large ribosomal subunit protein bL36 (38 aa).

Belongs to the bacterial ribosomal protein bL36 family.

In Lactobacillus acidophilus (strain ATCC 700396 / NCK56 / N2 / NCFM), this protein is Large ribosomal subunit protein bL36.